Consider the following 404-residue polypeptide: Acetylornithine aminotransferase (404 aa).

Pyridoxal 5'-phosphate-binding positions include 113-114 (GT) and phenylalanine 139. N(2)-acetyl-L-ornithine is bound at residue arginine 142. Residue 224 to 227 (DEVQ) coordinates pyridoxal 5'-phosphate. The residue at position 253 (lysine 253) is an N6-(pyridoxal phosphate)lysine. Serine 281 is a binding site for N(2)-acetyl-L-ornithine. Threonine 282 provides a ligand contact to pyridoxal 5'-phosphate.

It belongs to the class-III pyridoxal-phosphate-dependent aminotransferase family. ArgD subfamily. In terms of assembly, homodimer. Requires pyridoxal 5'-phosphate as cofactor.

It localises to the cytoplasm. It carries out the reaction N(2)-acetyl-L-ornithine + 2-oxoglutarate = N-acetyl-L-glutamate 5-semialdehyde + L-glutamate. Its pathway is amino-acid biosynthesis; L-arginine biosynthesis; N(2)-acetyl-L-ornithine from L-glutamate: step 4/4. The protein is Acetylornithine aminotransferase of Mycobacterium leprae (strain TN).